The following is a 356-amino-acid chain: sn-glycerol-3-phosphate import ATP-binding protein UgpC (356 aa).

The 232-residue stretch at 4–235 folds into the ABC transporter domain; the sequence is LKLQAVTKSW…PASLFVASFI (232 aa). ATP is bound at residue 37 to 44; that stretch reads GPSGCGKS.

Belongs to the ABC transporter superfamily. sn-glycerol-3-phosphate importer (TC 3.A.1.1.3) family. As to quaternary structure, the complex is composed of two ATP-binding proteins (UgpC), two transmembrane proteins (UgpA and UgpE) and a solute-binding protein (UgpB).

The protein localises to the cell inner membrane. It carries out the reaction sn-glycerol 3-phosphate(out) + ATP + H2O = sn-glycerol 3-phosphate(in) + ADP + phosphate + H(+). Functionally, part of the ABC transporter complex UgpBAEC involved in sn-glycerol-3-phosphate (G3P) import. Responsible for energy coupling to the transport system. This is sn-glycerol-3-phosphate import ATP-binding protein UgpC from Escherichia coli (strain UTI89 / UPEC).